The primary structure comprises 338 residues: Ketol-acid reductoisomerase (NADP(+)) (338 aa).

The region spanning 1–181 is the KARI N-terminal Rossmann domain; it reads MKVFYDKDAD…GGGRAGIIET (181 aa). NADP(+)-binding positions include 24–27, Arg47, and Ser52; that span reads YGSQ. Residue His107 is part of the active site. Gly133 provides a ligand contact to NADP(+). The 146-residue stretch at 182-327 folds into the KARI C-terminal knotted domain; sequence NFREETETDL…AKLRAMMPWI (146 aa). Residues Asp190, Glu194, Glu226, and Glu230 each contribute to the Mg(2+) site. Ser251 contacts substrate.

This sequence belongs to the ketol-acid reductoisomerase family. It depends on Mg(2+) as a cofactor.

The catalysed reaction is (2R)-2,3-dihydroxy-3-methylbutanoate + NADP(+) = (2S)-2-acetolactate + NADPH + H(+). It carries out the reaction (2R,3R)-2,3-dihydroxy-3-methylpentanoate + NADP(+) = (S)-2-ethyl-2-hydroxy-3-oxobutanoate + NADPH + H(+). It participates in amino-acid biosynthesis; L-isoleucine biosynthesis; L-isoleucine from 2-oxobutanoate: step 2/4. It functions in the pathway amino-acid biosynthesis; L-valine biosynthesis; L-valine from pyruvate: step 2/4. In terms of biological role, involved in the biosynthesis of branched-chain amino acids (BCAA). Catalyzes an alkyl-migration followed by a ketol-acid reduction of (S)-2-acetolactate (S2AL) to yield (R)-2,3-dihydroxy-isovalerate. In the isomerase reaction, S2AL is rearranged via a Mg-dependent methyl migration to produce 3-hydroxy-3-methyl-2-ketobutyrate (HMKB). In the reductase reaction, this 2-ketoacid undergoes a metal-dependent reduction by NADPH to yield (R)-2,3-dihydroxy-isovalerate. The polypeptide is Ketol-acid reductoisomerase (NADP(+)) (Polynucleobacter necessarius subsp. necessarius (strain STIR1)).